Reading from the N-terminus, the 157-residue chain is MPRPTKFRRVEFFPENNYFVPWGKPKCEIHEVVLKVEELEAMRLKDIEELNQEQCAEKMEISRQTFQNIIDSARKKVAIALTEGNAIKISGGHYTTKLCKLKCIDCEEIYEINYEQDRHLCPNCGSEKVICNKKADFCRRWCKGQNRKEQYEESKNK.

It belongs to the UPF0251 family.

This Clostridium botulinum (strain Okra / Type B1) protein is UPF0251 protein CLD_3165.